The chain runs to 359 residues: Membrane-bound lytic murein transglycosylase C (359 aa).

Positions 1–16 are cleaved as a signal peptide; that stretch reads MKKYLALALIAPLLIS. A lipid anchor (N-palmitoyl cysteine) is attached at cysteine 17. Cysteine 17 is lipidated: S-diacylglycerol cysteine.

The protein belongs to the transglycosylase Slt family.

Its subcellular location is the cell outer membrane. It catalyses the reaction Exolytic cleavage of the (1-&gt;4)-beta-glycosidic linkage between N-acetylmuramic acid (MurNAc) and N-acetylglucosamine (GlcNAc) residues in peptidoglycan, from either the reducing or the non-reducing ends of the peptidoglycan chains, with concomitant formation of a 1,6-anhydrobond in the MurNAc residue.. Murein-degrading enzyme. May play a role in recycling of muropeptides during cell elongation and/or cell division. The protein is Membrane-bound lytic murein transglycosylase C of Escherichia coli (strain SMS-3-5 / SECEC).